A 623-amino-acid polypeptide reads, in one-letter code: AM-toxin biosynthesis protein 12-2 (623 aa).

Positions 110-129 (TIPGTSQAKNTEPDHQASGL) are disordered.

The protein operates within mycotoxin biosynthesis. Functionally, part of the gene clusters that mediate the biosynthesis of AM-toxins, host-selective toxins (HSTs) causing Alternaria blotch on apple, a worldwide distributed disease. AM-toxins are cyclic depsipeptides containing the 3 residues 2-hydroxy-isovaleric acid (2-HIV), dehydroalanine, L-alanine which are common for all 3 AM-toxins I to III. The fourth precursor is L-alpha-amino-methoxyphenyl-valeric acid (L-Amv) for AM-toxin I, L-alpha-amino-phenyl-valeric acid (L-Apv) for AM-toxin II, and L-alpha-amino-hydroxyphenyl-valeric acid (L-Ahv) for AM-toxin III. AM-toxins have two target sites for affecting susceptible apple cells; they cause invagination of the plasma membrane and electrolyte loss and chloroplast disorganization. The non-ribosomal peptide synthetase AMT1 contains 4 catalytic modules and is responsible for activation of each residue in AM-toxin. The aldo-keto reductase AMT2 catalyzes the conversion of 2-keto-isovaleric acid (2-KIV) to 2-hydroxy-isovaleric acid (2-HIV), one of the precursor residues incorporated by AMT1 during AM-toxin biosynthesis, by reduction of its ketone to an alcohol. The cytochrome P450 monooxygenase AMT3 and the thioesterase AMT4 are also important for AM-toxin production, but their exact function within the AM-toxin biosynthesis are not known yet. Up to 21 proteins (including AMT1 to AMT4) are predicted to be involved in AM-toxin biosynthesis since their expression ishighly up-regulated in AM-toxin-producing cultures. In Alternaria alternata (Alternaria rot fungus), this protein is AM-toxin biosynthesis protein 12-2.